The sequence spans 954 residues: Glycine dehydrogenase (decarboxylating) (954 aa).

N6-(pyridoxal phosphate)lysine is present on K701.

This sequence belongs to the GcvP family. The glycine cleavage system is composed of four proteins: P, T, L and H. Pyridoxal 5'-phosphate serves as cofactor.

It catalyses the reaction N(6)-[(R)-lipoyl]-L-lysyl-[glycine-cleavage complex H protein] + glycine + H(+) = N(6)-[(R)-S(8)-aminomethyldihydrolipoyl]-L-lysyl-[glycine-cleavage complex H protein] + CO2. In terms of biological role, the glycine cleavage system catalyzes the degradation of glycine. The P protein binds the alpha-amino group of glycine through its pyridoxal phosphate cofactor; CO(2) is released and the remaining methylamine moiety is then transferred to the lipoamide cofactor of the H protein. In Bordetella parapertussis (strain 12822 / ATCC BAA-587 / NCTC 13253), this protein is Glycine dehydrogenase (decarboxylating).